We begin with the raw amino-acid sequence, 1578 residues long: Pentafunctional AROM polypeptide (1578 aa).

Residues 1–393 (MSVELAKVSI…YGTSAHVVSD (393 aa)) are 3-dehydroquinate synthase. NAD(+) is bound by residues 44–46 (DTN), 79–82 (EAHK), 110–112 (GGV), and D115. R126 serves as a coordination point for 7-phospho-2-dehydro-3-deoxy-D-arabino-heptonate. An NAD(+)-binding site is contributed by 135–136 (TS). D142 and K148 together coordinate 7-phospho-2-dehydro-3-deoxy-D-arabino-heptonate. Position 157 (K157) interacts with NAD(+). N158 contributes to the 7-phospho-2-dehydro-3-deoxy-D-arabino-heptonate binding site. NAD(+) is bound by residues 175–178 (WLET) and N186. E190 lines the Zn(2+) pocket. Residues 190–193 (EVIK) and K259 each bind 7-phospho-2-dehydro-3-deoxy-D-arabino-heptonate. The Proton acceptor; for 3-dehydroquinate synthase activity role is filled by E269. 7-phospho-2-dehydro-3-deoxy-D-arabino-heptonate-binding positions include 273-277 (RNLLN) and H280. H280 provides a ligand contact to Zn(2+). The active-site Proton acceptor; for 3-dehydroquinate synthase activity is the H284. Positions 296 and 365 each coordinate 7-phospho-2-dehydro-3-deoxy-D-arabino-heptonate. Zn(2+) is bound at residue H296. The interval 406–863 (VHPFNNIPEG…WDVLHSQLGA (458 aa)) is EPSP synthase. C845 serves as the catalytic For EPSP synthase activity. The interval 882 to 1071 (VVIIGMRAAG…VPSRRSAFVC (190 aa)) is shikimate kinase. 886-893 (GMRAAGKS) contacts ATP. Residues 1072-1284 (LTFEDLSDHL…AAPGQLTLAE (213 aa)) are 3-dehydroquinase. H1189 functions as the Proton acceptor; for 3-dehydroquinate dehydratase activity in the catalytic mechanism. Catalysis depends on K1218, which acts as the Schiff-base intermediate with substrate; for 3-dehydroquinate dehydratase activity. The shikimate dehydrogenase stretch occupies residues 1297 to 1578 (AKKFFVIGSP…KAIFDAVTQE (282 aa)).

In the N-terminal section; belongs to the sugar phosphate cyclases superfamily. Dehydroquinate synthase family. It in the 2nd section; belongs to the EPSP synthase family. The protein in the 3rd section; belongs to the shikimate kinase family. This sequence in the 4th section; belongs to the type-I 3-dehydroquinase family. In the C-terminal section; belongs to the shikimate dehydrogenase family. Homodimer. Zn(2+) serves as cofactor.

The protein resides in the cytoplasm. The catalysed reaction is 7-phospho-2-dehydro-3-deoxy-D-arabino-heptonate = 3-dehydroquinate + phosphate. It carries out the reaction 3-dehydroquinate = 3-dehydroshikimate + H2O. The enzyme catalyses shikimate + NADP(+) = 3-dehydroshikimate + NADPH + H(+). It catalyses the reaction shikimate + ATP = 3-phosphoshikimate + ADP + H(+). The catalysed reaction is 3-phosphoshikimate + phosphoenolpyruvate = 5-O-(1-carboxyvinyl)-3-phosphoshikimate + phosphate. It functions in the pathway metabolic intermediate biosynthesis; chorismate biosynthesis; chorismate from D-erythrose 4-phosphate and phosphoenolpyruvate: step 2/7. It participates in metabolic intermediate biosynthesis; chorismate biosynthesis; chorismate from D-erythrose 4-phosphate and phosphoenolpyruvate: step 3/7. The protein operates within metabolic intermediate biosynthesis; chorismate biosynthesis; chorismate from D-erythrose 4-phosphate and phosphoenolpyruvate: step 4/7. Its pathway is metabolic intermediate biosynthesis; chorismate biosynthesis; chorismate from D-erythrose 4-phosphate and phosphoenolpyruvate: step 5/7. It functions in the pathway metabolic intermediate biosynthesis; chorismate biosynthesis; chorismate from D-erythrose 4-phosphate and phosphoenolpyruvate: step 6/7. Its function is as follows. The AROM polypeptide catalyzes 5 consecutive enzymatic reactions in prechorismate polyaromatic amino acid biosynthesis. This is Pentafunctional AROM polypeptide from Kluyveromyces lactis (strain ATCC 8585 / CBS 2359 / DSM 70799 / NBRC 1267 / NRRL Y-1140 / WM37) (Yeast).